The chain runs to 367 residues: Flagellar P-ring protein (367 aa).

An N-terminal signal peptide occupies residues 1 to 21 (MYVFKALAGIVLALVATLAHA).

Belongs to the FlgI family. As to quaternary structure, the basal body constitutes a major portion of the flagellar organelle and consists of four rings (L,P,S, and M) mounted on a central rod.

Its subcellular location is the periplasm. The protein localises to the bacterial flagellum basal body. In terms of biological role, assembles around the rod to form the L-ring and probably protects the motor/basal body from shearing forces during rotation. The protein is Flagellar P-ring protein of Salmonella paratyphi C (strain RKS4594).